Reading from the N-terminus, the 341-residue chain is MRLCLIPRNTGTPQRVLRPVVWSPPSRKKPVLSPHNSIMFGHLSPVRIPCLRGKFNLQLPSLDDQVIPARLPKTEVSAEEPKEATEVKDQVETQGQEDNKRGPCSNGEAASTSRPLETQGNLTSSWYNPRPLEGNVHLKSLTEKNQTDKAQVHAVSFYSKGHGVASSHSPAGGILPFGKPDPLPTVLPAPVPGCSLWPEKAALKVLGEDHLPSSPGLLMVGEDMQPKDPAALGSSRSSPPRAAGHRSHKRKLSGPPLQLQPTPPLQLRCDRDERPPPAKLPCLSPEALLVGQASQREGRLQHGNMRKNMRVLSRISKFRRLRQLLRRRKKTRQGRRGGSCL.

Disordered regions lie at residues 72 to 131 (PKTE…NPRP) and 216 to 283 (GLLM…LPCL). A compositionally biased stretch (basic and acidic residues) spans 79 to 101 (EEPKEATEVKDQVETQGQEDNKR). The span at 108 to 127 (EAASTSRPLETQGNLTSSWY) shows a compositional bias: polar residues. Residues 243–252 (AGHRSHKRKL) show a composition bias toward basic residues.

The protein belongs to the UPF0607 family.

This is Putative UPF0607 protein FLJ37424 from Homo sapiens (Human).